The primary structure comprises 679 residues: Tripartite terminase subunit 1 (679 aa).

Residues 180–208 form a C3H1-type zinc finger; it reads CIYCLNEHMMLPNQGESLPSLMMCVNCKH.

The protein belongs to the herpesviridae TRM1 protein family. Associates with TRM2 and TRM3 to form the tripartite terminase complex. Interacts with portal protein.

The protein resides in the host nucleus. Component of the molecular motor that translocates viral genomic DNA in empty capsid during DNA packaging. Forms a tripartite terminase complex together with TRM2 and TRM3 in the host cytoplasm. Once the complex reaches the host nucleus, it interacts with the capsid portal vertex. This portal forms a ring in which genomic DNA is translocated into the capsid. TRM1 carries an endonuclease activity that plays an important role for the cleavage of concatemeric viral DNA into unit length genomes. The chain is Tripartite terminase subunit 1 from Saimiriine herpesvirus 2 (strain 11) (SaHV-2).